Here is a 208-residue protein sequence, read N- to C-terminus: Truncated thymidylate kinase (208 aa).

It belongs to the thymidylate kinase family.

Catalyzes the conversion of dTMP to dTDP. This Ornithodoros (relapsing fever ticks) protein is Truncated thymidylate kinase (TMK).